Consider the following 382-residue polypeptide: Probable inactive dehydrogenase easA (382 aa).

FMN contacts are provided by residues 25 to 27 (PMT), alanine 60, glutamine 102, and histidine 171. Histidine 171 and asparagine 174 together coordinate substrate. FMN contacts are provided by residues lysine 223, glycine 299, 324-325 (GR), and arginine 325. Tyrosine 352 lines the substrate pocket.

Belongs to the NADH:flavin oxidoreductase/NADH oxidase family.

Probable inactive dehydrogenase; part of the gene cluster that mediates the biosynthesis of fungal ergot alkaloid. DmaW catalyzes the first step of ergot alkaloid biosynthesis by condensing dimethylallyl diphosphate (DMAP) and tryptophan to form 4-dimethylallyl-L-tryptophan. The second step is catalyzed by the methyltransferase easF that methylates 4-dimethylallyl-L-tryptophan in the presence of S-adenosyl-L-methionine, resulting in the formation of 4-dimethylallyl-L-abrine. The catalase easC and the FAD-dependent oxidoreductase easE then transform 4-dimethylallyl-L-abrine to chanoclavine-I which is further oxidized by easD in the presence of NAD(+), resulting in the formation of chanoclavine-I aldehyde. Agroclavine dehydrogenase easG then mediates the conversion of chanoclavine-I aldehyde to agroclavine via a non-enzymatic adduct reaction: the substrate is an iminium intermediate that is formed spontaneously from chanoclavine-I aldehyde in the presence of glutathione. Further conversion of agroclavine to paspalic acid is a two-step process involving oxidation of agroclavine to elymoclavine and of elymoclavine to paspalic acid, the second step being performed by the elymoclavine oxidase cloA. However, cloA does not encode a functional enzyme indicating that C.fusiformis terminates its ergot alkaloid pathway at elymoclavine. The protein is Probable inactive dehydrogenase easA of Claviceps fusiformis (Ergot fungus).